The chain runs to 173 residues: Co-chaperone protein HscB homolog (173 aa).

Residues 3 to 75 (NPFSLFNLPV…IARATAIIEI (73 aa)) enclose the J domain.

Belongs to the HscB family. Interacts with HscA and stimulates its ATPase activity.

Its function is as follows. Co-chaperone involved in the maturation of iron-sulfur cluster-containing proteins. Seems to help targeting proteins to be folded toward HscA. In Haemophilus ducreyi (strain 35000HP / ATCC 700724), this protein is Co-chaperone protein HscB homolog.